The chain runs to 189 residues: Ribosome maturation factor RimM (189 aa).

Over residues Met1–Thr16 the composition is skewed to polar residues. The interval Met1 to Asp21 is disordered. The PRC barrel domain occupies Glu118–Tyr189.

The protein belongs to the RimM family. As to quaternary structure, binds ribosomal protein uS19.

Its subcellular location is the cytoplasm. Its function is as follows. An accessory protein needed during the final step in the assembly of 30S ribosomal subunit, possibly for assembly of the head region. Essential for efficient processing of 16S rRNA. May be needed both before and after RbfA during the maturation of 16S rRNA. It has affinity for free ribosomal 30S subunits but not for 70S ribosomes. This is Ribosome maturation factor RimM from Thiobacillus denitrificans (strain ATCC 25259 / T1).